The sequence spans 221 residues: Large ribosomal subunit protein uL16y (221 aa).

The protein belongs to the universal ribosomal protein uL16 family. In terms of assembly, component of the small ribosomal subunit. Mature ribosomes consist of a small (40S) and a large (60S) subunit. The 40S subunit contains about 33 different proteins and 1 molecule of RNA (18S). The 60S subunit contains about 49 different proteins and 3 molecules of RNA (25S, 5.8S and 5S).

The chain is Large ribosomal subunit protein uL16y (RPL10B) from Arabidopsis thaliana (Mouse-ear cress).